The following is a 459-amino-acid chain: Bifunctional protein GlmU (459 aa).

Positions 1-230 (MSNRFAVILA…FDETLGVNDR (230 aa)) are pyrophosphorylase. Residues 9–12 (LAAG), K23, Q73, and 78–79 (GT) contribute to the UDP-N-acetyl-alpha-D-glucosamine site. Position 103 (D103) interacts with Mg(2+). UDP-N-acetyl-alpha-D-glucosamine contacts are provided by G140, E155, N170, and N228. N228 contacts Mg(2+). The segment at 231-251 (VALSQAEIIMKNRINRKNMVN) is linker. Residues 252–459 (GVTIIDPSNT…VDQLLNKKKS (208 aa)) form an N-acetyltransferase region. UDP-N-acetyl-alpha-D-glucosamine contacts are provided by R333 and K351. H363 acts as the Proton acceptor in catalysis. Y366 and N377 together coordinate UDP-N-acetyl-alpha-D-glucosamine. Acetyl-CoA is bound by residues 386–387 (NY), A423, and R440.

It in the N-terminal section; belongs to the N-acetylglucosamine-1-phosphate uridyltransferase family. This sequence in the C-terminal section; belongs to the transferase hexapeptide repeat family. In terms of assembly, homotrimer. The cofactor is Mg(2+).

Its subcellular location is the cytoplasm. The enzyme catalyses alpha-D-glucosamine 1-phosphate + acetyl-CoA = N-acetyl-alpha-D-glucosamine 1-phosphate + CoA + H(+). It catalyses the reaction N-acetyl-alpha-D-glucosamine 1-phosphate + UTP + H(+) = UDP-N-acetyl-alpha-D-glucosamine + diphosphate. The protein operates within nucleotide-sugar biosynthesis; UDP-N-acetyl-alpha-D-glucosamine biosynthesis; N-acetyl-alpha-D-glucosamine 1-phosphate from alpha-D-glucosamine 6-phosphate (route II): step 2/2. Its pathway is nucleotide-sugar biosynthesis; UDP-N-acetyl-alpha-D-glucosamine biosynthesis; UDP-N-acetyl-alpha-D-glucosamine from N-acetyl-alpha-D-glucosamine 1-phosphate: step 1/1. It functions in the pathway bacterial outer membrane biogenesis; LPS lipid A biosynthesis. Catalyzes the last two sequential reactions in the de novo biosynthetic pathway for UDP-N-acetylglucosamine (UDP-GlcNAc). The C-terminal domain catalyzes the transfer of acetyl group from acetyl coenzyme A to glucosamine-1-phosphate (GlcN-1-P) to produce N-acetylglucosamine-1-phosphate (GlcNAc-1-P), which is converted into UDP-GlcNAc by the transfer of uridine 5-monophosphate (from uridine 5-triphosphate), a reaction catalyzed by the N-terminal domain. The polypeptide is Bifunctional protein GlmU (Bacillus mycoides (strain KBAB4) (Bacillus weihenstephanensis)).